We begin with the raw amino-acid sequence, 529 residues long: Bifunctional purine biosynthesis protein PurH (529 aa).

In terms of domain architecture, MGS-like spans 1-148 (MQQRRPVRRA…KNHKDVAIVV (148 aa)).

It belongs to the PurH family.

It catalyses the reaction (6R)-10-formyltetrahydrofolate + 5-amino-1-(5-phospho-beta-D-ribosyl)imidazole-4-carboxamide = 5-formamido-1-(5-phospho-D-ribosyl)imidazole-4-carboxamide + (6S)-5,6,7,8-tetrahydrofolate. The catalysed reaction is IMP + H2O = 5-formamido-1-(5-phospho-D-ribosyl)imidazole-4-carboxamide. Its pathway is purine metabolism; IMP biosynthesis via de novo pathway; 5-formamido-1-(5-phospho-D-ribosyl)imidazole-4-carboxamide from 5-amino-1-(5-phospho-D-ribosyl)imidazole-4-carboxamide (10-formyl THF route): step 1/1. The protein operates within purine metabolism; IMP biosynthesis via de novo pathway; IMP from 5-formamido-1-(5-phospho-D-ribosyl)imidazole-4-carboxamide: step 1/1. The protein is Bifunctional purine biosynthesis protein PurH of Klebsiella pneumoniae (strain 342).